Here is a 559-residue protein sequence, read N- to C-terminus: 2-isopropylmalate synthase (559 aa).

The region spanning Pro33–Asp307 is the Pyruvate carboxyltransferase domain. Mg(2+) is bound by residues Asp42, His246, His248, and Asn282. Residues Ala439–Ala559 form a regulatory domain region.

Belongs to the alpha-IPM synthase/homocitrate synthase family. LeuA type 2 subfamily. In terms of assembly, homodimer. Mg(2+) is required as a cofactor.

Its subcellular location is the cytoplasm. The enzyme catalyses 3-methyl-2-oxobutanoate + acetyl-CoA + H2O = (2S)-2-isopropylmalate + CoA + H(+). Its pathway is amino-acid biosynthesis; L-leucine biosynthesis; L-leucine from 3-methyl-2-oxobutanoate: step 1/4. Functionally, catalyzes the condensation of the acetyl group of acetyl-CoA with 3-methyl-2-oxobutanoate (2-ketoisovalerate) to form 3-carboxy-3-hydroxy-4-methylpentanoate (2-isopropylmalate). This chain is 2-isopropylmalate synthase, found in Pseudomonas fluorescens (strain SBW25).